Consider the following 393-residue polypeptide: Chorismate synthase (393 aa).

Positions 40 and 46 each coordinate NADP(+). FMN is bound by residues arginine 129–serine 131, glutamine 250–alanine 251, glycine 301, lysine 316–threonine 320, and arginine 342.

Belongs to the chorismate synthase family. Homotetramer. It depends on FMNH2 as a cofactor.

It carries out the reaction 5-O-(1-carboxyvinyl)-3-phosphoshikimate = chorismate + phosphate. Its pathway is metabolic intermediate biosynthesis; chorismate biosynthesis; chorismate from D-erythrose 4-phosphate and phosphoenolpyruvate: step 7/7. Its function is as follows. Catalyzes the anti-1,4-elimination of the C-3 phosphate and the C-6 proR hydrogen from 5-enolpyruvylshikimate-3-phosphate (EPSP) to yield chorismate, which is the branch point compound that serves as the starting substrate for the three terminal pathways of aromatic amino acid biosynthesis. This reaction introduces a second double bond into the aromatic ring system. The polypeptide is Chorismate synthase (Acidobacterium capsulatum (strain ATCC 51196 / DSM 11244 / BCRC 80197 / JCM 7670 / NBRC 15755 / NCIMB 13165 / 161)).